Here is a 544-residue protein sequence, read N- to C-terminus: Protein angel homolog 2 (544 aa).

It belongs to the CCR4/nocturin family.

The sequence is that of Protein angel homolog 2 (ANGEL2) from Homo sapiens (Human).